We begin with the raw amino-acid sequence, 404 residues long: Cysteine desulfurase IscS (404 aa).

Pyridoxal 5'-phosphate-binding positions include 75-76 (AT), Asn155, Gln183, and 203-205 (SSH). An N6-(pyridoxal phosphate)lysine modification is found at Lys206. Thr243 is a pyridoxal 5'-phosphate binding site. The Cysteine persulfide intermediate role is filled by Cys328. Cys328 provides a ligand contact to [2Fe-2S] cluster.

It belongs to the class-V pyridoxal-phosphate-dependent aminotransferase family. NifS/IscS subfamily. In terms of assembly, homodimer. Forms a heterotetramer with IscU, interacts with other sulfur acceptors. Pyridoxal 5'-phosphate serves as cofactor.

Its subcellular location is the cytoplasm. It catalyses the reaction (sulfur carrier)-H + L-cysteine = (sulfur carrier)-SH + L-alanine. It functions in the pathway cofactor biosynthesis; iron-sulfur cluster biosynthesis. In terms of biological role, master enzyme that delivers sulfur to a number of partners involved in Fe-S cluster assembly, tRNA modification or cofactor biosynthesis. Catalyzes the removal of elemental sulfur atoms from cysteine to produce alanine. Functions as a sulfur delivery protein for Fe-S cluster synthesis onto IscU, an Fe-S scaffold assembly protein, as well as other S acceptor proteins. The chain is Cysteine desulfurase IscS from Haemophilus influenzae (strain PittEE).